Reading from the N-terminus, the 213-residue chain is High frequency lysogenization protein HflD homolog (213 aa).

A coiled-coil region spans residues 79–126 (QGLNAELTRYTLSLMVLERKLSSAKGALDTLGNRINGLQRQLEHFDLQ).

It belongs to the HflD family.

Its subcellular location is the cytoplasm. It is found in the cell inner membrane. This chain is High frequency lysogenization protein HflD homolog, found in Shigella dysenteriae serotype 1 (strain Sd197).